The sequence spans 619 residues: Phosphomethylpyrimidine synthase (619 aa).

Residues 93-104 (IKPEDNGLKGPD) are compositionally biased toward basic and acidic residues. The tract at residues 93-114 (IKPEDNGLKGPDRSGGVTPFPN) is disordered. Residues asparagine 217, methionine 246, tyrosine 275, histidine 311, 331–333 (SRG), 372–375 (DGLR), and glutamate 411 each bind substrate. Zn(2+) is bound at residue histidine 415. Position 438 (tyrosine 438) interacts with substrate. Histidine 479 contacts Zn(2+). Residues cysteine 559, cysteine 562, and cysteine 567 each coordinate [4Fe-4S] cluster.

It belongs to the ThiC family. In terms of assembly, homodimer. [4Fe-4S] cluster serves as cofactor.

It carries out the reaction 5-amino-1-(5-phospho-beta-D-ribosyl)imidazole + S-adenosyl-L-methionine = 4-amino-2-methyl-5-(phosphooxymethyl)pyrimidine + CO + 5'-deoxyadenosine + formate + L-methionine + 3 H(+). It functions in the pathway cofactor biosynthesis; thiamine diphosphate biosynthesis. In terms of biological role, catalyzes the synthesis of the hydroxymethylpyrimidine phosphate (HMP-P) moiety of thiamine from aminoimidazole ribotide (AIR) in a radical S-adenosyl-L-methionine (SAM)-dependent reaction. The chain is Phosphomethylpyrimidine synthase from Rhizorhabdus wittichii (strain DSM 6014 / CCUG 31198 / JCM 15750 / NBRC 105917 / EY 4224 / RW1) (Sphingomonas wittichii).